Consider the following 707-residue polypeptide: Tryptophan synthase (707 aa).

Residues 1 to 297 (MSEQLRQTFA…VKKEILDEFD (297 aa)) form a tryptophan synthase alpha chain region. Catalysis depends on proton acceptor residues Glu50 and Asp61. The tract at residues 298–707 (ENHKHPIRFG…DLRFEEDPSA (410 aa)) is tryptophan synthase beta chain. Residue Lys384 is modified to N6-(pyridoxal phosphate)lysine. Phosphoserine occurs at positions 540 and 683.

It in the N-terminal section; belongs to the TrpA family. In the C-terminal section; belongs to the TrpB family. It depends on pyridoxal 5'-phosphate as a cofactor.

It catalyses the reaction (1S,2R)-1-C-(indol-3-yl)glycerol 3-phosphate + L-serine = D-glyceraldehyde 3-phosphate + L-tryptophan + H2O. It participates in amino-acid biosynthesis; L-tryptophan biosynthesis; L-tryptophan from chorismate: step 5/5. This is Tryptophan synthase (TRP5) from Saccharomyces cerevisiae (strain ATCC 204508 / S288c) (Baker's yeast).